A 138-amino-acid polypeptide reads, in one-letter code: Lymphocyte antigen 6L (138 aa).

The first 16 residues, 1–16 (MERLVLTLCTLPLAVA), serve as a signal peptide directing secretion. An N-linked (GlcNAc...) asparagine glycan is attached at N27. The 95-residue stretch at 28–122 (LSCYQCFKVS…TPQEGRWALR (95 aa)) folds into the UPAR/Ly6 domain. 2 disulfides stabilise this stretch: C30/C47 and C103/C108. The GPI-anchor amidated glycine moiety is linked to residue G117. Positions 118 to 138 (RWALRGGLLLQVGLSLLRALL) are cleaved as a propeptide — removed in mature form.

It is found in the cell membrane. The sequence is that of Lymphocyte antigen 6L from Homo sapiens (Human).